A 76-amino-acid polypeptide reads, in one-letter code: Acyl carrier protein (76 aa).

The region spanning 2–76 (SSIFDKVKAI…SAVEYIKENQ (75 aa)) is the Carrier domain. Serine 36 carries the O-(pantetheine 4'-phosphoryl)serine modification.

This sequence belongs to the acyl carrier protein (ACP) family. In terms of processing, 4'-phosphopantetheine is transferred from CoA to a specific serine of apo-ACP by AcpS. This modification is essential for activity because fatty acids are bound in thioester linkage to the sulfhydryl of the prosthetic group.

Its subcellular location is the cytoplasm. It functions in the pathway lipid metabolism; fatty acid biosynthesis. Carrier of the growing fatty acid chain in fatty acid biosynthesis. This chain is Acyl carrier protein, found in Heliobacterium modesticaldum (strain ATCC 51547 / Ice1).